We begin with the raw amino-acid sequence, 196 residues long: UMP-CMP kinase (196 aa).

13-18 lines the ATP pocket; that stretch reads GAGKGT. S33 carries the phosphoserine modification. An NMP region spans residues 33-63; sequence SAGELLRDERKNPDSQYGELIEKYIKEGKIV. Residue R39 participates in a ribonucleoside 5'-phosphate binding. N6-acetyllysine is present on residues K43 and K55. 61–63 provides a ligand contact to a ribonucleoside 5'-phosphate; sequence KIV. Residue K73 forms a Glycyl lysine isopeptide (Lys-Gly) (interchain with G-Cter in SUMO2) linkage. An a ribonucleoside 5'-phosphate-binding site is contributed by 93 to 96; the sequence is GFPR. N100 contributes to the CMP binding site. At K106 the chain carries N6-succinyllysine. Positions 133 to 143 are LID; the sequence is ERGKSSGRSDD. R134 serves as a coordination point for ATP. Residues R140 and R151 each contribute to the a ribonucleoside 5'-phosphate site. K179 contacts ATP. S180 is subject to Phosphoserine.

The protein belongs to the adenylate kinase family. UMP-CMP kinase subfamily. In terms of assembly, monomer. Mg(2+) is required as a cofactor.

It localises to the nucleus. The protein localises to the cytoplasm. It carries out the reaction CMP + ATP = CDP + ADP. The enzyme catalyses dCMP + ATP = dCDP + ADP. It catalyses the reaction UMP + ATP = UDP + ADP. The catalysed reaction is a 2'-deoxyribonucleoside 5'-diphosphate + ATP = a 2'-deoxyribonucleoside 5'-triphosphate + ADP. It carries out the reaction a ribonucleoside 5'-diphosphate + ATP = a ribonucleoside 5'-triphosphate + ADP. Functionally, catalyzes the phosphorylation of pyrimidine nucleoside monophosphates at the expense of ATP. Plays an important role in de novo pyrimidine nucleotide biosynthesis. Has preference for UMP and CMP as phosphate acceptors. Also displays broad nucleoside diphosphate kinase activity. The protein is UMP-CMP kinase (Cmpk1) of Mus musculus (Mouse).